The chain runs to 226 residues: V-type proton ATPase subunit E 1 (226 aa).

A2 carries the post-translational modification N-acetylalanine. Y56 is modified (phosphotyrosine).

The protein belongs to the V-ATPase E subunit family. As to quaternary structure, V-ATPase is a heteromultimeric enzyme made up of two complexes: the ATP-hydrolytic V1 complex and the proton translocation V0 complex. The V1 complex consists of three catalytic AB heterodimers that form a heterohexamer, three peripheral stalks each consisting of EG heterodimers, one central rotor including subunits D and F, and the regulatory subunits C and H. The proton translocation complex V0 consists of the proton transport subunit a, a ring of proteolipid subunits c9c'', rotary subunit d, subunits e and f, and the accessory subunits ATP6AP1/Ac45 and ATP6AP2/PRR. Interacts with RABL2/RABL2A; binds preferentially to GTP-bound RABL2. Interacts with ALDOC. Interacts with RAB11B. In terms of tissue distribution, expressed in brain (at protein level).

It localises to the apical cell membrane. The protein resides in the cytoplasmic vesicle. The protein localises to the secretory vesicle. Its subcellular location is the synaptic vesicle membrane. It is found in the clathrin-coated vesicle membrane. Functionally, subunit of the V1 complex of vacuolar(H+)-ATPase (V-ATPase), a multisubunit enzyme composed of a peripheral complex (V1) that hydrolyzes ATP and a membrane integral complex (V0) that translocates protons. V-ATPase is responsible for acidifying and maintaining the pH of intracellular compartments and in some cell types, is targeted to the plasma membrane, where it is responsible for acidifying the extracellular environment. This Rattus norvegicus (Rat) protein is V-type proton ATPase subunit E 1 (Atp6v1e1).